The chain runs to 426 residues: Glutamate-1-semialdehyde 2,1-aminomutase (426 aa).

The residue at position 265 (Lys265) is an N6-(pyridoxal phosphate)lysine.

This sequence belongs to the class-III pyridoxal-phosphate-dependent aminotransferase family. HemL subfamily. As to quaternary structure, homodimer. Pyridoxal 5'-phosphate serves as cofactor.

It localises to the cytoplasm. The enzyme catalyses (S)-4-amino-5-oxopentanoate = 5-aminolevulinate. It participates in porphyrin-containing compound metabolism; protoporphyrin-IX biosynthesis; 5-aminolevulinate from L-glutamyl-tRNA(Glu): step 2/2. The sequence is that of Glutamate-1-semialdehyde 2,1-aminomutase from Actinobacillus pleuropneumoniae serotype 7 (strain AP76).